Reading from the N-terminus, the 1196-residue chain is Sorbin and SH3 domain-containing protein 2 (1196 aa).

2 disordered regions span residues 25-57 (VQSS…ETLN) and 75-95 (PNLQ…GNSG). Phosphoserine occurs at positions 27, 28, and 40. Residues 83–92 (PTQSHITING) show a composition bias toward polar residues. Ser-130 and Ser-143 each carry phosphoserine. Met-148 carries the post-translational modification Alanine amide. Residues 166-227 (VIKAPHYPGI…YNTPYTYNAG (62 aa)) enclose the SoHo domain. Residues 235 to 247 (AQSHPAAKTQTYR) show a composition bias toward polar residues. Disordered regions lie at residues 235–314 (AQSH…EPGK) and 329–407 (SSID…GDDS). Basic and acidic residues-rich tracts occupy residues 252–262 (SHSDNGTDAFK) and 276–312 (RPRD…EYEP). Ser-254 bears the Phosphoserine mark. A compositionally biased stretch (polar residues) spans 329-343 (SSIDRSLERPSSSAS). Phosphoserine occurs at positions 334, 340, 343, and 354. Thr-372 is subject to Phosphothreonine. Phosphoserine is present on Ser-382. Positions 382–399 (SSSTFTTSFISSSPSSPS) are enriched in low complexity. Thr-387 carries the phosphothreonine modification. Residues Ser-392, Ser-393, Ser-394, Ser-396, Ser-397, Ser-399, Ser-478, Ser-589, Ser-592, Ser-645, Ser-648, Ser-844, and Ser-938 each carry the phosphoserine modification. A disordered region spans residues 929–958 (QDHESPRSYSSTLTDLGRSVSRERRGTPEK). Residues 948–958 (VSRERRGTPEK) show a composition bias toward basic and acidic residues. SH3 domains lie at 959–1018 (EVKL…KLTP) and 1034–1095 (GEIG…VVKR). 2 positions are modified to phosphoserine: Ser-1113 and Ser-1119. The SH3 3 domain maps to 1137–1196 (GGGEPFQALYNYTPRNEDELELRESDVVDVMEKCDDGWFVGTSRRTKFFGTFPGNYVKRL).

As to quaternary structure, interacts with ABL1/c-Abl, ABL2/v-Abl/Arg, ACTN, CBL and PALLD. Interacts with ABL, CBL, DNM1, DNM2, FLOT1, AFDN, PTK2B/PYK2, SAPAP, SPTAN1, SYNJ1, SYNJ2, VCL/vinculin and WASF. Interacts with PTPN12 and WASF1 via its SH3 domains; this interaction may mediate the partial PTPN12 and WASF1 translocation to focal adhesion sites. In terms of processing, ubiquitinated by CBL. Expressed in brain; found in synapses in cerebellum.

The protein resides in the cytoplasm. The protein localises to the perinuclear region. It localises to the apical cell membrane. It is found in the cell junction. Its subcellular location is the focal adhesion. The protein resides in the cell projection. The protein localises to the lamellipodium. Adapter protein that plays a role in the assembling of signaling complexes, being a link between ABL kinases and actin cytoskeleton. Can form complex with ABL1 and CBL, thus promoting ubiquitination and degradation of ABL1. May play a role in the regulation of pancreatic cell adhesion, possibly by acting on WASF1 phosphorylation, enhancing phosphorylation by ABL1, as well as dephosphorylation by PTPN12. Isoform 2 increases water and sodium absorption in the intestine and gall-bladder. The chain is Sorbin and SH3 domain-containing protein 2 (Sorbs2) from Rattus norvegicus (Rat).